A 116-amino-acid polypeptide reads, in one-letter code: Large ribosomal subunit protein bL17 (116 aa).

Belongs to the bacterial ribosomal protein bL17 family. As to quaternary structure, part of the 50S ribosomal subunit. Contacts protein L32.

This chain is Large ribosomal subunit protein bL17, found in Parasynechococcus marenigrum (strain WH8102).